The primary structure comprises 159 residues: Phosphodiesterase delta-like protein (159 aa).

Belongs to the PDE6D/unc-119 family.

In Caenorhabditis elegans, this protein is Phosphodiesterase delta-like protein (pdl-1).